We begin with the raw amino-acid sequence, 178 residues long: NAD(P)H-quinone oxidoreductase subunit J (178 aa).

The protein belongs to the complex I 30 kDa subunit family. As to quaternary structure, NDH-1 can be composed of about 15 different subunits; different subcomplexes with different compositions have been identified which probably have different functions.

It is found in the cellular thylakoid membrane. It carries out the reaction a plastoquinone + NADH + (n+1) H(+)(in) = a plastoquinol + NAD(+) + n H(+)(out). It catalyses the reaction a plastoquinone + NADPH + (n+1) H(+)(in) = a plastoquinol + NADP(+) + n H(+)(out). Functionally, NDH-1 shuttles electrons from an unknown electron donor, via FMN and iron-sulfur (Fe-S) centers, to quinones in the respiratory and/or the photosynthetic chain. The immediate electron acceptor for the enzyme in this species is believed to be plastoquinone. Couples the redox reaction to proton translocation, and thus conserves the redox energy in a proton gradient. Cyanobacterial NDH-1 also plays a role in inorganic carbon-concentration. In Crocosphaera subtropica (strain ATCC 51142 / BH68) (Cyanothece sp. (strain ATCC 51142)), this protein is NAD(P)H-quinone oxidoreductase subunit J.